The sequence spans 213 residues: uncharacterized protein (213 aa).

3 residues coordinate S-adenosyl-L-methionine: Gly-53, Glu-74, and Asp-97.

It belongs to the methyltransferase superfamily. YrrT family.

Could be a S-adenosyl-L-methionine-dependent methyltransferase. This is an uncharacterized protein from Geobacillus sp. (strain WCH70).